A 461-amino-acid polypeptide reads, in one-letter code: MSYPGQGGNTYGGGPPGGYGGYNQQDRYGGGGGNYGPPQGPPPGQYGGGYGGPGGGYGGSGGGYGPPQGPPPGQYGGSGGPGGYGPPQGPPPGQRGNYGPPQGPPGGQGGGGGGYGHPGMGNQAPPGQYGQPGPPGPHGNHNMPPQGNQAFGGTQGYHFQYSNCSGKKKALLIGCNYIGSKNALRGCINDVHNLQRYLVQRAGYKPDDMVILTDDQRDQRSIPTKQNILQACQWLVKGAQPNDSLVFHFSGHGGQEKDVDGDEDDGYDECIYPVDFQRAGSIIDDVLHDILVKSLPPGCRLTALFDSCHSGTALDLPYVYSTKGILKEPNLAKEAGQGLLGAVSSYARGDIGGALSSIMGTVKQATTGSGANQRAKQTKTAPCDAISISGCKDSQTSADAMEGGTATGAMSFAFIEVMTRDPNQSYLSLLNNMREVLRGKYSQKPQLSASHPTDVNLKFIM.

Gly residues-rich tracts occupy residues 1-21, 45-66, 74-86, and 105-119; these read MSYPGQGGNTYGGGPPGGYGG, QYGGGYGGPGGGYGGSGGGYGP, QYGGSGGPGGYGP, and PGGQGGGGGGYGHPG. The segment at 1–154 is disordered; that stretch reads MSYPGQGGNT…PQGNQAFGGT (154 aa). Composition is skewed to low complexity over residues 121 to 131 and 138 to 148; these read GNQAPPGQYGQ and HGNHNMPPQGN. Catalysis depends on residues His-252 and Cys-308.

It belongs to the peptidase C14B family.

Its function is as follows. Involved in cell death (apoptosis). In Yarrowia lipolytica (strain CLIB 122 / E 150) (Yeast), this protein is Metacaspase-1 (MCA1).